Here is a 466-residue protein sequence, read N- to C-terminus: 3-isopropylmalate dehydratase large subunit (466 aa).

3 residues coordinate [4Fe-4S] cluster: C347, C407, and C410.

Belongs to the aconitase/IPM isomerase family. LeuC type 1 subfamily. Heterodimer of LeuC and LeuD. The cofactor is [4Fe-4S] cluster.

It carries out the reaction (2R,3S)-3-isopropylmalate = (2S)-2-isopropylmalate. It functions in the pathway amino-acid biosynthesis; L-leucine biosynthesis; L-leucine from 3-methyl-2-oxobutanoate: step 2/4. Catalyzes the isomerization between 2-isopropylmalate and 3-isopropylmalate, via the formation of 2-isopropylmaleate. This Acidiphilium cryptum (strain JF-5) protein is 3-isopropylmalate dehydratase large subunit.